A 376-amino-acid chain; its full sequence is N-acetyldiaminopimelate deacetylase (376 aa).

Residue aspartate 69 is part of the active site. Glutamate 128 serves as the catalytic Proton acceptor.

This sequence belongs to the peptidase M20A family. N-acetyldiaminopimelate deacetylase subfamily.

The enzyme catalyses N-acetyl-(2S,6S)-2,6-diaminopimelate + H2O = (2S,6S)-2,6-diaminopimelate + acetate. It participates in amino-acid biosynthesis; L-lysine biosynthesis via DAP pathway; LL-2,6-diaminopimelate from (S)-tetrahydrodipicolinate (acetylase route): step 3/3. In terms of biological role, catalyzes the conversion of N-acetyl-diaminopimelate to diaminopimelate and acetate. The protein is N-acetyldiaminopimelate deacetylase of Bacillus anthracis (strain A0248).